The following is a 474-amino-acid chain: Ankyrin repeat, SAM and basic leucine zipper domain-containing protein 1 (474 aa).

The segment at 1–31 (MAGRLRGPAVPGGGESSDSDEDGWDIGYTER) is disordered. Residues serine 16, serine 17, and serine 19 each carry the phosphoserine modification. 6 ANK repeats span residues 43 to 72 (EKDEVLKRALTTGDGSLLEELLNSGMQVDS), 76 to 105 (FGWTPLMYAASIANVDLVRILLDRGANASF), 108 to 142 (DQHTVLMAACSARVPEERILKTAELLLSRNASPNA), 146 to 175 (KRMSPLMYAAREGHSQLVALLVGHGAEINA), 179 to 208 (NGYTALAWAARHGHKTTVLKLLELGADKTL), and 212 to 241 (DGKTPAEIAKRNKHPELFSMLSLTLNPLHG). The region spanning 270-333 (SYSAFGDLEI…KIMDAVEELQ (64 aa)) is the SAM domain.

Interacts with DDX4, PIWIL1, RANBP9 and TDRD1.

Its subcellular location is the cytoplasm. Plays a central role during spermatogenesis by repressing transposable elements and preventing their mobilization, which is essential for the germline integrity. Acts via the piRNA metabolic process, which mediates the repression of transposable elements during meiosis by forming complexes composed of piRNAs and Piwi proteins and governs the methylation and subsequent repression of transposons. Its association with pi-bodies suggests a participation in the primary piRNAs metabolic process. Required prior to the pachytene stage to facilitate the production of multiple types of piRNAs, including those associated with repeats involved in the regulation of retrotransposons. May act by mediating protein-protein interactions during germ cell maturation. This chain is Ankyrin repeat, SAM and basic leucine zipper domain-containing protein 1 (ASZ1), found in Ornithorhynchus anatinus (Duckbill platypus).